A 377-amino-acid polypeptide reads, in one-letter code: Phosphoserine aminotransferase (377 aa).

An L-glutamate-binding site is contributed by R43. Positions 105, 164, 189, and 212 each coordinate pyridoxal 5'-phosphate. K213 is modified (N6-(pyridoxal phosphate)lysine). 254–255 contributes to the pyridoxal 5'-phosphate binding site; sequence NT.

Belongs to the class-V pyridoxal-phosphate-dependent aminotransferase family. SerC subfamily. As to quaternary structure, homodimer. The cofactor is pyridoxal 5'-phosphate.

The protein localises to the cytoplasm. It carries out the reaction O-phospho-L-serine + 2-oxoglutarate = 3-phosphooxypyruvate + L-glutamate. It catalyses the reaction 4-(phosphooxy)-L-threonine + 2-oxoglutarate = (R)-3-hydroxy-2-oxo-4-phosphooxybutanoate + L-glutamate. The protein operates within amino-acid biosynthesis; L-serine biosynthesis; L-serine from 3-phospho-D-glycerate: step 2/3. Its pathway is cofactor biosynthesis; pyridoxine 5'-phosphate biosynthesis; pyridoxine 5'-phosphate from D-erythrose 4-phosphate: step 3/5. Its function is as follows. Catalyzes the reversible conversion of 3-phosphohydroxypyruvate to phosphoserine and of 3-hydroxy-2-oxo-4-phosphonooxybutanoate to phosphohydroxythreonine. In Bordetella bronchiseptica (strain ATCC BAA-588 / NCTC 13252 / RB50) (Alcaligenes bronchisepticus), this protein is Phosphoserine aminotransferase.